The primary structure comprises 337 residues: Protein MICROTUBULE BINDING PROTEIN 2C (337 aa).

Residues 80 to 147 (RGSMTYTKMP…STSSLTEKDR (68 aa)) are disordered. Residues 89-103 (PSRESLYKKTSEVKG) are compositionally biased toward basic and acidic residues. Residues 120–142 (KNVSSSQDGYAENFSTPSSTSSL) are compositionally biased toward polar residues. Coiled coils occupy residues 143–194 (TEKD…MKKD), 223–250 (VEKL…LQGE), and 294–314 (LQKM…AKEN).

Belongs to the microtubule binding protein 2C family. In terms of assembly, interacts with KN-1. Binds to tobacco mosaic virus movement protein (TMV-MP) at microtubules. Constitutively expressed in leaves.

The protein resides in the cytoplasm. It localises to the cytoskeleton. Its function is as follows. Prevents homeodomain proteins (e.g. STM) association to plasmodesmata and, consequently, cell-to-cell transport. Binds to RNA. Alters KN1 RNA-binding capacity. Regulates cytoskeleton (e.g. actin) organization that determinates cell shape. Interferes with cell-to-cell transport of tobacco mosaic virus movement protein (TMV-MP) by mediating its accumulation at microtubules, thus interfering with cell-to-cell virus movement. This chain is Protein MICROTUBULE BINDING PROTEIN 2C, found in Nicotiana tabacum (Common tobacco).